A 208-amino-acid chain; its full sequence is Rac-like GTP-binding protein ARAC8 (208 aa).

15-22 (GDGAVGKT) is a binding site for GTP. The Effector region motif lies at 37–45 (YIPTVFDNF). Residues 62-66 (DTAGQ) and 120-123 (TKMD) contribute to the GTP site. Residues cysteine 199 and cysteine 205 are each lipidated (S-palmitoyl cysteine).

The protein belongs to the small GTPase superfamily. Rho family. Interacts with ICR1. Binds to SPK1. Post-translationally, although this sequence has a C-terminal -CXXX, it is palmitoylated at Cys-205, rather than prenylated.

The protein resides in the membrane. In terms of biological role, acts as a negative regulator of abscisic acid (ABA) responses. The chain is Rac-like GTP-binding protein ARAC8 (ARAC8) from Arabidopsis thaliana (Mouse-ear cress).